Reading from the N-terminus, the 339-residue chain is Ferredoxin--NADP reductase (339 aa).

7 residues coordinate FAD: E35, Q43, Y48, V88, F122, D287, and S327.

The protein belongs to the ferredoxin--NADP reductase type 2 family. In terms of assembly, homodimer. Requires FAD as cofactor.

It carries out the reaction 2 reduced [2Fe-2S]-[ferredoxin] + NADP(+) + H(+) = 2 oxidized [2Fe-2S]-[ferredoxin] + NADPH. This Leuconostoc citreum (strain KM20) protein is Ferredoxin--NADP reductase.